A 105-amino-acid polypeptide reads, in one-letter code: UPF0235 protein RT0827 (105 aa).

The protein belongs to the UPF0235 family.

The protein is UPF0235 protein RT0827 of Rickettsia typhi (strain ATCC VR-144 / Wilmington).